Consider the following 29-residue polypeptide: Cytochrome b6-f complex subunit 8 (29 aa).

Residues 3 to 23 (IVSLAWAVLMVVFTFSLSLVV) traverse the membrane as a helical segment.

It belongs to the PetN family. In terms of assembly, the 4 large subunits of the cytochrome b6-f complex are cytochrome b6, subunit IV (17 kDa polypeptide, PetD), cytochrome f and the Rieske protein, while the 4 small subunits are PetG, PetL, PetM and PetN. The complex functions as a dimer.

It is found in the plastid. The protein resides in the chloroplast thylakoid membrane. Functionally, component of the cytochrome b6-f complex, which mediates electron transfer between photosystem II (PSII) and photosystem I (PSI), cyclic electron flow around PSI, and state transitions. This Drimys granadensis protein is Cytochrome b6-f complex subunit 8.